A 187-amino-acid chain; its full sequence is ATP synthase subunit b 2 (187 aa).

The helical transmembrane segment at 32–52 threads the bilayer; that stretch reads TTFAAQILWLAIAFGLLYYLM.

It belongs to the ATPase B chain family. As to quaternary structure, F-type ATPases have 2 components, F(1) - the catalytic core - and F(0) - the membrane proton channel. F(1) has five subunits: alpha(3), beta(3), gamma(1), delta(1), epsilon(1). F(0) has three main subunits: a(1), b(2) and c(10-14). The alpha and beta chains form an alternating ring which encloses part of the gamma chain. F(1) is attached to F(0) by a central stalk formed by the gamma and epsilon chains, while a peripheral stalk is formed by the delta and b chains.

The protein localises to the cell inner membrane. Its function is as follows. F(1)F(0) ATP synthase produces ATP from ADP in the presence of a proton or sodium gradient. F-type ATPases consist of two structural domains, F(1) containing the extramembraneous catalytic core and F(0) containing the membrane proton channel, linked together by a central stalk and a peripheral stalk. During catalysis, ATP synthesis in the catalytic domain of F(1) is coupled via a rotary mechanism of the central stalk subunits to proton translocation. Functionally, component of the F(0) channel, it forms part of the peripheral stalk, linking F(1) to F(0). The b'-subunit is a diverged and duplicated form of b found in plants and photosynthetic bacteria. This chain is ATP synthase subunit b 2 (atpF2), found in Methylobacterium sp. (strain 4-46).